The primary structure comprises 224 residues: Large ribosomal subunit protein uL1c (224 aa).

It belongs to the universal ribosomal protein uL1 family. In terms of assembly, part of the 50S ribosomal subunit.

Its subcellular location is the plastid. The protein resides in the chloroplast. In terms of biological role, binds directly to 23S rRNA. Might be involved in E site tRNA release (Potential). The polypeptide is Large ribosomal subunit protein uL1c (rpl1) (Cyanidioschyzon merolae (strain NIES-3377 / 10D) (Unicellular red alga)).